The sequence spans 24 residues: Superoxide dismutase [Cu-Zn] (24 aa).

Belongs to the Cu-Zn superoxide dismutase family. As to quaternary structure, homodimer. The cofactor is Cu cation. Requires Zn(2+) as cofactor.

It is found in the cytoplasm. The enzyme catalyses 2 superoxide + 2 H(+) = H2O2 + O2. In terms of biological role, destroys radicals which are normally produced within the cells and which are toxic to biological systems. This Aquarana catesbeiana (American bullfrog) protein is Superoxide dismutase [Cu-Zn] (sod1).